The sequence spans 352 residues: Anthranilate phosphoribosyltransferase (352 aa).

Residues G96, 99 to 100, S104, 106 to 109, 124 to 132, and S136 each bind 5-phospho-alpha-D-ribose 1-diphosphate; these read GS, NIST, and KHGNRSVSS. Residue G96 participates in anthranilate binding. S108 is a Mg(2+) binding site. Position 127 (N127) interacts with anthranilate. R182 is an anthranilate binding site. D241 and E242 together coordinate Mg(2+).

Belongs to the anthranilate phosphoribosyltransferase family. As to quaternary structure, homodimer. Mg(2+) serves as cofactor.

It carries out the reaction N-(5-phospho-beta-D-ribosyl)anthranilate + diphosphate = 5-phospho-alpha-D-ribose 1-diphosphate + anthranilate. Its pathway is amino-acid biosynthesis; L-tryptophan biosynthesis; L-tryptophan from chorismate: step 2/5. Functionally, catalyzes the transfer of the phosphoribosyl group of 5-phosphorylribose-1-pyrophosphate (PRPP) to anthranilate to yield N-(5'-phosphoribosyl)-anthranilate (PRA). This chain is Anthranilate phosphoribosyltransferase, found in Syntrophotalea carbinolica (strain DSM 2380 / NBRC 103641 / GraBd1) (Pelobacter carbinolicus).